Consider the following 386-residue polypeptide: Magnesium transporter MRS2-7 (386 aa).

2 helical membrane passes run 321–341 (LMLSAGTVCVSVYSMIAGIFG) and 355–375 (IFKWVVSLTGTFCIVLFVIIL). The Required for magnesium transport activity signature appears at 341–343 (GMN).

Belongs to the CorA metal ion transporter (MIT) (TC 1.A.35.5) family. Isoform 1 is expressed in the whole plant. Isoform 4 is expressed only in roots and flowers.

Its subcellular location is the endoplasmic reticulum membrane. Low-affinity magnesium transporter that mediates the influx of magnesium. This Arabidopsis thaliana (Mouse-ear cress) protein is Magnesium transporter MRS2-7 (MRS2-7).